A 177-amino-acid polypeptide reads, in one-letter code: Peptide methionine sulfoxide reductase MsrA (177 aa).

Cys-15 is a catalytic residue.

The protein belongs to the MsrA Met sulfoxide reductase family.

It carries out the reaction L-methionyl-[protein] + [thioredoxin]-disulfide + H2O = L-methionyl-(S)-S-oxide-[protein] + [thioredoxin]-dithiol. It catalyses the reaction [thioredoxin]-disulfide + L-methionine + H2O = L-methionine (S)-S-oxide + [thioredoxin]-dithiol. Its function is as follows. Has an important function as a repair enzyme for proteins that have been inactivated by oxidation. Catalyzes the reversible oxidation-reduction of methionine sulfoxide in proteins to methionine. The chain is Peptide methionine sulfoxide reductase MsrA from Listeria monocytogenes serotype 4a (strain HCC23).